The sequence spans 309 residues: Protein FdhE (309 aa).

It belongs to the FdhE family.

The protein resides in the cytoplasm. In terms of biological role, necessary for formate dehydrogenase activity. This is Protein FdhE from Salmonella paratyphi A (strain ATCC 9150 / SARB42).